A 57-amino-acid chain; its full sequence is Large ribosomal subunit protein uL30 (57 aa).

The protein belongs to the universal ribosomal protein uL30 family. Part of the 50S ribosomal subunit.

The polypeptide is Large ribosomal subunit protein uL30 (Acholeplasma laidlawii (strain PG-8A)).